Here is a 461-residue protein sequence, read N- to C-terminus: Argininosuccinate lyase (461 aa).

This sequence belongs to the lyase 1 family. Argininosuccinate lyase subfamily.

Its subcellular location is the cytoplasm. It catalyses the reaction 2-(N(omega)-L-arginino)succinate = fumarate + L-arginine. Its pathway is amino-acid biosynthesis; L-arginine biosynthesis; L-arginine from L-ornithine and carbamoyl phosphate: step 3/3. This is Argininosuccinate lyase from Shewanella piezotolerans (strain WP3 / JCM 13877).